Reading from the N-terminus, the 211-residue chain is ATP phosphoribosyltransferase (211 aa).

The protein belongs to the ATP phosphoribosyltransferase family. Short subfamily. In terms of assembly, heteromultimer composed of HisG and HisZ subunits.

Its subcellular location is the cytoplasm. The enzyme catalyses 1-(5-phospho-beta-D-ribosyl)-ATP + diphosphate = 5-phospho-alpha-D-ribose 1-diphosphate + ATP. Its pathway is amino-acid biosynthesis; L-histidine biosynthesis; L-histidine from 5-phospho-alpha-D-ribose 1-diphosphate: step 1/9. Its function is as follows. Catalyzes the condensation of ATP and 5-phosphoribose 1-diphosphate to form N'-(5'-phosphoribosyl)-ATP (PR-ATP). Has a crucial role in the pathway because the rate of histidine biosynthesis seems to be controlled primarily by regulation of HisG enzymatic activity. This chain is ATP phosphoribosyltransferase, found in Bacillus cereus (strain AH187).